The chain runs to 309 residues: uncharacterized protein (309 aa).

6 helical membrane passes run 28-48 (IIAL…IMKP), 73-93 (MMLN…VIGW), 113-133 (LIVI…LLPI), 157-177 (ITAF…YFHS), 220-240 (FVVI…AALF), and 259-279 (IFAV…ILIL).

It is found in the cell membrane. This is an uncharacterized protein from Bacillus subtilis (strain 168).